Reading from the N-terminus, the 370-residue chain is S-adenosylmethionine decarboxylase proenzyme (370 aa).

Phe28 provides a ligand contact to substrate. Catalysis depends on residues Glu29 and Glu32. A substrate-binding site is contributed by Glu85. The active-site Schiff-base intermediate with substrate; via pyruvic acid is Ser86. Ser86 is subject to Pyruvic acid (Ser); by autocatalysis. The active-site Proton donor; for catalytic activity is the Cys100. Residues Ser250 and His263 each act as proton acceptor; for processing activity in the active site. Glu267 is a binding site for substrate.

This sequence belongs to the eukaryotic AdoMetDC family. As to quaternary structure, forms a heterodimer with catalytically inactive AdoMetDC prozyme; heterodimerization is required to activate AdoMetDC. Requires pyruvate as cofactor. In terms of processing, is synthesized initially as an inactive proenzyme. Formation of the active enzyme involves a self-maturation process in which the active site pyruvoyl group is generated from an internal serine residue via an autocatalytic post-translational modification. Two non-identical subunits are generated from the proenzyme in this reaction, and the pyruvate is formed at the N-terminus of the alpha chain, which is derived from the carboxyl end of the proenzyme. The post-translation cleavage follows an unusual pathway, termed non-hydrolytic serinolysis, in which the side chain hydroxyl group of the serine supplies its oxygen atom to form the C-terminus of the beta chain, while the remainder of the serine residue undergoes an oxidative deamination to the alpha chain.

It catalyses the reaction S-adenosyl-L-methionine + H(+) = S-adenosyl 3-(methylsulfanyl)propylamine + CO2. It functions in the pathway amine and polyamine biosynthesis; S-adenosylmethioninamine biosynthesis; S-adenosylmethioninamine from S-adenosyl-L-methionine: step 1/1. Allosterically activated by AdoMetDC prozyme. Activated by putrescine. Inhibited by spermine and methylglyoxal-bis(guanylhydrazone) (MGBG) and slightly by spermidine. Inhibited by 5'-([(Z)-4-amino-2-butenyl]methylamino)-5'-deoxyadenosine (MDL 73811). Functionally, probably in association with catalytically inactive AdoMetDC prozyme, catalyzes the decarboxylation of S-adenosyl-L-methionine which is essential for the biosynthesis of the polyamine spermidine. Required for growth and survival during the bloodstream life cycle stage. The protein is S-adenosylmethionine decarboxylase proenzyme of Trypanosoma cruzi.